Here is a 726-residue protein sequence, read N- to C-terminus: Probable cadmium-transporting ATPase (726 aa).

The region spanning 11–74 (DKQVYRVEGF…AGAFENLKVF (64 aa)) is the HMA domain. Cd(2+) contacts are provided by C22 and C25. A run of 5 helical transmembrane segments spans residues 105-125 (STLL…FVNG), 129-149 (LVTS…LFKV), 163-179 (TLMT…GEWA), 335-355 (IIMV…GGSW), and 363-383 (LAVL…ISIV). The active-site 4-aspartylphosphate intermediate is D414. 2 helical membrane passes run 671-693 (LNII…LLVI) and 698-720 (TLWI…SLRL).

This sequence belongs to the cation transport ATPase (P-type) (TC 3.A.3) family. Type IB subfamily.

Its subcellular location is the cell membrane. The enzyme catalyses Cd(2+)(in) + ATP + H2O = Cd(2+)(out) + ADP + phosphate + H(+). Couples the hydrolysis of ATP with the export of cadmium. The sequence is that of Probable cadmium-transporting ATPase (cadA) from Staphylococcus aureus (strain MRSA252).